Reading from the N-terminus, the 401-residue chain is Elongation factor Tu 1 (401 aa).

The region spanning 10-209 (KPHVNVGTIG…AVDEYIPTPV (200 aa)) is the tr-type G domain. The interval 19-26 (GHVDHGKT) is G1. GTP is bound at residue 19-26 (GHVDHGKT). Thr26 lines the Mg(2+) pocket. The tract at residues 60-64 (GITIA) is G2. The G3 stretch occupies residues 81-84 (DCPG). GTP contacts are provided by residues 81 to 85 (DCPGH) and 136 to 139 (NKVD). The interval 136-139 (NKVD) is G4. The segment at 174 to 176 (SAL) is G5.

Belongs to the TRAFAC class translation factor GTPase superfamily. Classic translation factor GTPase family. EF-Tu/EF-1A subfamily. In terms of assembly, monomer.

The protein resides in the cytoplasm. The enzyme catalyses GTP + H2O = GDP + phosphate + H(+). Its function is as follows. GTP hydrolase that promotes the GTP-dependent binding of aminoacyl-tRNA to the A-site of ribosomes during protein biosynthesis. The sequence is that of Elongation factor Tu 1 from Roseiflexus castenholzii (strain DSM 13941 / HLO8).